We begin with the raw amino-acid sequence, 477 residues long: Bifunctional protein HldE (477 aa).

Residues 1–318 are ribokinase; that stretch reads MKVTLPEFER…ENAVRGRADT (318 aa). At Lys179 the chain carries N6-acetyllysine. 195-198 contacts ATP; the sequence is NLSE. The active site involves Asp264. The interval 344–477 is cytidylyltransferase; it reads MTNGVFDILH…IKKIQQDKKG (134 aa).

The protein in the N-terminal section; belongs to the carbohydrate kinase PfkB family. This sequence in the C-terminal section; belongs to the cytidylyltransferase family. Homodimer.

The enzyme catalyses D-glycero-beta-D-manno-heptose 7-phosphate + ATP = D-glycero-beta-D-manno-heptose 1,7-bisphosphate + ADP + H(+). The catalysed reaction is D-glycero-beta-D-manno-heptose 1-phosphate + ATP + H(+) = ADP-D-glycero-beta-D-manno-heptose + diphosphate. It functions in the pathway nucleotide-sugar biosynthesis; ADP-L-glycero-beta-D-manno-heptose biosynthesis; ADP-L-glycero-beta-D-manno-heptose from D-glycero-beta-D-manno-heptose 7-phosphate: step 1/4. The protein operates within nucleotide-sugar biosynthesis; ADP-L-glycero-beta-D-manno-heptose biosynthesis; ADP-L-glycero-beta-D-manno-heptose from D-glycero-beta-D-manno-heptose 7-phosphate: step 3/4. Its pathway is bacterial outer membrane biogenesis; LPS core biosynthesis. In terms of biological role, catalyzes the phosphorylation of D-glycero-D-manno-heptose 7-phosphate at the C-1 position to selectively form D-glycero-beta-D-manno-heptose-1,7-bisphosphate. Its function is as follows. Catalyzes the ADP transfer from ATP to D-glycero-beta-D-manno-heptose 1-phosphate, yielding ADP-D-glycero-beta-D-manno-heptose. The sequence is that of Bifunctional protein HldE from Escherichia coli O157:H7.